The sequence spans 185 residues: Elongation factor P (185 aa).

Belongs to the elongation factor P family.

The protein resides in the cytoplasm. The protein operates within protein biosynthesis; polypeptide chain elongation. In terms of biological role, involved in peptide bond synthesis. Stimulates efficient translation and peptide-bond synthesis on native or reconstituted 70S ribosomes in vitro. Probably functions indirectly by altering the affinity of the ribosome for aminoacyl-tRNA, thus increasing their reactivity as acceptors for peptidyl transferase. The protein is Elongation factor P of Tropheryma whipplei (strain TW08/27) (Whipple's bacillus).